The chain runs to 957 residues: Glycine dehydrogenase (decarboxylating) (957 aa).

An N6-(pyridoxal phosphate)lysine modification is found at lysine 708.

The protein belongs to the GcvP family. In terms of assembly, the glycine cleavage system is composed of four proteins: P, T, L and H. Pyridoxal 5'-phosphate serves as cofactor.

It catalyses the reaction N(6)-[(R)-lipoyl]-L-lysyl-[glycine-cleavage complex H protein] + glycine + H(+) = N(6)-[(R)-S(8)-aminomethyldihydrolipoyl]-L-lysyl-[glycine-cleavage complex H protein] + CO2. Functionally, the glycine cleavage system catalyzes the degradation of glycine. The P protein binds the alpha-amino group of glycine through its pyridoxal phosphate cofactor; CO(2) is released and the remaining methylamine moiety is then transferred to the lipoamide cofactor of the H protein. This is Glycine dehydrogenase (decarboxylating) from Escherichia coli O157:H7.